A 514-amino-acid chain; its full sequence is 2,3-bisphosphoglycerate-independent phosphoglycerate mutase (514 aa).

The Mn(2+) site is built by aspartate 14 and serine 64. Serine 64 functions as the Phosphoserine intermediate in the catalytic mechanism. Residues histidine 125, arginine 155–aspartate 156, arginine 187, arginine 193, arginine 263–arginine 266, and lysine 336 each bind substrate. Residues aspartate 403, histidine 407, aspartate 444, histidine 445, and histidine 463 each coordinate Mn(2+).

Belongs to the BPG-independent phosphoglycerate mutase family. Monomer. Mn(2+) serves as cofactor.

The enzyme catalyses (2R)-2-phosphoglycerate = (2R)-3-phosphoglycerate. It functions in the pathway carbohydrate degradation; glycolysis; pyruvate from D-glyceraldehyde 3-phosphate: step 3/5. Catalyzes the interconversion of 2-phosphoglycerate and 3-phosphoglycerate. This chain is 2,3-bisphosphoglycerate-independent phosphoglycerate mutase, found in Escherichia coli O6:H1 (strain CFT073 / ATCC 700928 / UPEC).